The chain runs to 343 residues: GTPase Obg (343 aa).

Residues 1–157 (MKFIDEVSIS…IEVRLELKLI (157 aa)) enclose the Obg domain. The interval 13 to 44 (SGRGGPGCVSFRRESMQARGGPDGGNGGKGGD) is disordered. Gly residues predominate over residues 33-43 (GPDGGNGGKGG). In terms of domain architecture, OBG-type G spans 158–338 (ADVGIVGFPN…FVQELARQIL (181 aa)). GTP contacts are provided by residues 164-171 (GFPNAGKS), 189-193 (FTTLT), 211-214 (DIPG), 290-293 (NKID), and 319-321 (SAV). Residues S171 and T191 each contribute to the Mg(2+) site.

The protein belongs to the TRAFAC class OBG-HflX-like GTPase superfamily. OBG GTPase family. As to quaternary structure, monomer. Requires Mg(2+) as cofactor.

It localises to the cytoplasm. Its function is as follows. An essential GTPase which binds GTP, GDP and possibly (p)ppGpp with moderate affinity, with high nucleotide exchange rates and a fairly low GTP hydrolysis rate. Plays a role in control of the cell cycle, stress response, ribosome biogenesis and in those bacteria that undergo differentiation, in morphogenesis control. In Bdellovibrio bacteriovorus (strain ATCC 15356 / DSM 50701 / NCIMB 9529 / HD100), this protein is GTPase Obg.